A 637-amino-acid chain; its full sequence is DNA mismatch repair protein MutL (637 aa).

The span at 353-371 shows a compositional bias: polar residues; that stretch reads GQGQRPVSSASMPSASRQA. A disordered region spans residues 353–444; the sequence is GQGQRPVSSA…SEAASETPHD (92 aa). Residues 378–389 are compositionally biased toward basic and acidic residues; the sequence is DWIKEGVQDWDW. Over residues 396–406 the composition is skewed to pro residues; it reads PQNPPQNPPPG. Residues 430 to 444 are compositionally biased toward basic and acidic residues; the sequence is SGKELSEAASETPHD.

It belongs to the DNA mismatch repair MutL/HexB family.

Its function is as follows. This protein is involved in the repair of mismatches in DNA. It is required for dam-dependent methyl-directed DNA mismatch repair. May act as a 'molecular matchmaker', a protein that promotes the formation of a stable complex between two or more DNA-binding proteins in an ATP-dependent manner without itself being part of a final effector complex. The sequence is that of DNA mismatch repair protein MutL from Beijerinckia indica subsp. indica (strain ATCC 9039 / DSM 1715 / NCIMB 8712).